The chain runs to 144 residues: Maximins 6/Hv (144 aa).

The first 18 residues, 1-18 (MNFKYIVAVSFLIASGYA), serve as a signal peptide directing secretion. A propeptide spanning residues 19–43 (RSEENDVQSLSQREVLEEETLREIR) is cleaved from the precursor. Asparagine amide is present on N70. Positions 74–123 (TAKGHEVMKRLEAVMRDLDSLDHPEEASERETRGFNQEEIANLFTKKEKR) are excised as a propeptide. An Isoleucine amide modification is found at I143.

This sequence belongs to the bombinin family. Expressed by the skin glands.

The protein localises to the secreted. Its function is as follows. Shows antimicrobial activity against bacteria and against the fungus C.albicans. It has little hemolytic activity. Shows antimicrobial activity against bacteria and against the fungus C.albicans. Shows strong hemolytic activity. In Bombina maxima (Giant fire-bellied toad), this protein is Maximins 6/Hv.